Here is a 522-residue protein sequence, read N- to C-terminus: Type-2 serine--tRNA ligase (522 aa).

Ala-319 contacts L-serine. Cys-321 is a binding site for Zn(2+). Residue Arg-350 participates in L-serine binding. Residues 350-352 (RWE) and 361-362 (RV) contribute to the ATP site. An L-serine-binding site is contributed by 367 to 369 (RIE). Positions 369 and 476 each coordinate Zn(2+). An ATP-binding site is contributed by Arg-483.

It belongs to the class-II aminoacyl-tRNA synthetase family. Type-2 seryl-tRNA synthetase subfamily. Homodimer. Requires Zn(2+) as cofactor.

The protein resides in the cytoplasm. It catalyses the reaction tRNA(Ser) + L-serine + ATP = L-seryl-tRNA(Ser) + AMP + diphosphate + H(+). It carries out the reaction tRNA(Sec) + L-serine + ATP = L-seryl-tRNA(Sec) + AMP + diphosphate + H(+). The protein operates within aminoacyl-tRNA biosynthesis; selenocysteinyl-tRNA(Sec) biosynthesis; L-seryl-tRNA(Sec) from L-serine and tRNA(Sec): step 1/1. Its function is as follows. Catalyzes the attachment of serine to tRNA(Ser). Is also able to aminoacylate tRNA(Sec) with serine, to form the misacylated tRNA L-seryl-tRNA(Sec), which will be further converted into selenocysteinyl-tRNA(Sec). The polypeptide is Type-2 serine--tRNA ligase (serS) (Methanococcus aeolicus (strain ATCC BAA-1280 / DSM 17508 / OCM 812 / Nankai-3)).